Reading from the N-terminus, the 438-residue chain is MKAALDLKPTLSIKTEKEYEAYSCSDMECADVPLLTPSSKEMMSQALRATFSRFTKEQQRLGIPIDPREWTDMHVREWVSWAVNEFTLKGVDFQKFCMSGAALCALGKECFLELAPDFVGDILWEHLEILQKDSKQYQTSEITPAYPESRYTSDYFISYGIEHAQCVPPSEFSEPSFITESYQTLHPISSEELLSLKYENDYPLGLLRDPLQPESLQGDYFTIKQEVVTPDNMCLGRISRGKLGGQESFESIESHDSCDRLTQSWSSQSSYNSLQRVPSYDSFDSEDYPPAMPSHKSKGTFKDYVRDRAELNKDKPVIPAAALAGYTGSGPIQLWQFLLELLTDKSCQSFISWTGDGWEFKLSDPDEVARRWGKRKNKPKMNYEKLSRGLRYYYDKNIIHKTAGKRYVYRFVCDLQSLLGYVPEELHAMLDVKPDTDE.

Residues 49–134 form the PNT domain; it reads ATFSRFTKEQ…EHLEILQKDS (86 aa). The tract at residues 128 to 240 is activation domain; required for transcription activation; that stretch reads EILQKDSKQY…DNMCLGRISR (113 aa). The helix HI-1 stretch occupies residues 301-309; it reads FKDYVRDRA. The helix HI-2 stretch occupies residues 320–327; that stretch reads AAALAGYT. Residues 332–412 constitute a DNA-binding region (ETS); sequence IQLWQFLLEL…AGKRYVYRFV (81 aa). The tract at residues 415–419 is helix H4; that stretch reads LQSLL. The segment at 423 to 429 is helix H5; the sequence is PEELHAM.

The protein belongs to the ETS family. In terms of assembly, binds DNA as a homodimer; homodimerization is required for transcription activation.

It localises to the nucleus. The protein resides in the cytoplasm. With respect to regulation, autoinhibited by a module composed of four alpha helices (HI-1, HI-2, H4, and H5) that flank the DNA-binding ETS domain, reducing the affinity for DNA. In terms of biological role, transcription factor. Directly controls the expression of cytokine and chemokine genes in a wide variety of different cellular contexts. The protein is Protein c-ets-1-A (ets1-a) of Xenopus laevis (African clawed frog).